Reading from the N-terminus, the 420-residue chain is Ammonium transporter Amt2 (420 aa).

A run of 11 helical transmembrane segments spans residues Val34–Leu54, Asn71–Ser91, Ser120–Ala140, Val149–Trp169, Ala180–Leu200, Ile220–Gly240, Gly250–Ala270, Asn273–Thr293, Val295–Val315, Val339–Val359, and Ile365–Ile385.

This sequence belongs to the ammonia transporter channel (TC 1.A.11.2) family. As to quaternary structure, homotrimer. Interacts and forms a complex with GlnK2.

The protein resides in the cell membrane. In terms of biological role, involved in the uptake of ammonium/ammonia (NH(4)(+)/NH(3)). Transport is electrogenic. This chain is Ammonium transporter Amt2, found in Methanocaldococcus jannaschii (strain ATCC 43067 / DSM 2661 / JAL-1 / JCM 10045 / NBRC 100440) (Methanococcus jannaschii).